The primary structure comprises 364 residues: Peptide chain release factor 2 (364 aa).

N5-methylglutamine is present on Q251.

It belongs to the prokaryotic/mitochondrial release factor family. In terms of processing, methylated by PrmC. Methylation increases the termination efficiency of RF2.

The protein localises to the cytoplasm. Peptide chain release factor 2 directs the termination of translation in response to the peptide chain termination codons UGA and UAA. The protein is Peptide chain release factor 2 of Sulfurovum sp. (strain NBC37-1).